We begin with the raw amino-acid sequence, 639 residues long: PTS-dependent dihydroxyacetone kinase operon regulatory protein (639 aa).

The segment at 1–318 is sensor domain; the sequence is MSGAFNNDGR…MRQLMTSQLG (318 aa). The GAF domain maps to 52–189; the sequence is AMLTLGQAAL…AIAREVGNLL (138 aa). A PAS domain is found at 203–265; the sequence is NQLNALLESM…AVLQQAIKQA (63 aa). Residues 327–552 form the Sigma-54 factor interaction domain; it reads MPQDDPQTRR…LYSVIENLAL (226 aa). Residues 355–362 and 415–424 each bind ATP; these read GEEGVGKA and AHGGTLFLEK.

Homodimer. DhaR forms complexes with DhaK and DhaL-ADP.

Its function is as follows. Positively regulates the dhaKLM operon from a sigma-70 promoter. Represses its own expression. In Escherichia coli (strain K12), this protein is PTS-dependent dihydroxyacetone kinase operon regulatory protein.